The chain runs to 20 residues: Photosystem II stability/assembly factor HCF136, chloroplastic (20 aa).

Belongs to the Ycf48 family.

It localises to the plastid. Its subcellular location is the chloroplast thylakoid lumen. Its function is as follows. Essential for photosystem II (PSII) biogenesis; required for assembly of an early intermediate in PSII assembly that includes D2 (psbD) and cytochrome b559. In Spinacia oleracea (Spinach), this protein is Photosystem II stability/assembly factor HCF136, chloroplastic.